We begin with the raw amino-acid sequence, 406 residues long: E3 ubiquitin-protein ligase RING1 (406 aa).

At Thr24 the chain carries Phosphothreonine. Residues 30–234 (MDGTEIAVSP…GGAGSEDSGD (205 aa)) form a necessary for transcriptional repression region. Ser38 is subject to Phosphoserine. An RING-type zinc finger spans residues 48–88 (CPICLDMLKNTMTTKECLHRFCSDCIVTALRSGNKECPTCR). Phosphoserine occurs at positions 140, 187, and 190. Disordered stretches follow at residues 151–263 (HRAQ…GEIE) and 309–354 (QQQE…PSLE). Acidic residues predominate over residues 175–187 (EPGEGEGDGEDVS). The short motif at 201 to 204 (KRPR) is the Nuclear localization signal element. Positions 214–228 (GTGGGAAGGACGGAG) are enriched in gly residues. Phosphothreonine is present on Thr215. 2 positions are modified to phosphoserine: Ser229 and Ser232. A necessary for interaction with CBX2 region spans residues 230 to 406 (EDSGDRGGTL…LCYAPTKDPK (177 aa)). Over residues 235-244 (RGGTLGGGTL) the composition is skewed to gly residues. Residues 246–258 (PPSPPGAPSPPEP) show a composition bias toward pro residues. Residues Ser248 and Ser254 each carry the phosphoserine modification. A compositionally biased stretch (gly residues) spans 317–343 (GGPGGGASDTGGPDGGGGERGVAGGGE).

As to quaternary structure, component of chromatin-associated Polycomb (PcG) complexes. Part of the E2F6.com-1 complex in G0 phase composed of E2F6, MGA, MAX, TFDP1, CBX3, BAT8, EUHMTASE1, RING1, RNF2/RING2 MBLR, L3MBTL2 and YAF2. Interacts with CBX2 and PCGF6. Component of a PRC1-like complex. Component of repressive BCOR complex containing Polycomb group subcomplex at least composed of RYBP, PCGF1, BCOR and RNF2/RING2. Interacts with PHC2, PCGF2, RNF2; CBX6, CBX7 and CBX8. Interacts with BMI1. Interacts with MN1. Interacts with USP26.

It is found in the nucleus speckle. It catalyses the reaction S-ubiquitinyl-[E2 ubiquitin-conjugating enzyme]-L-cysteine + [acceptor protein]-L-lysine = [E2 ubiquitin-conjugating enzyme]-L-cysteine + N(6)-ubiquitinyl-[acceptor protein]-L-lysine.. It participates in protein modification; protein ubiquitination. In terms of biological role, constitutes one of the E3 ubiquitin-protein ligases that mediate monoubiquitination of 'Lys-119' of histone H2A, thereby playing a central role in histone code and gene regulation. H2A 'Lys-119' ubiquitination gives a specific tag for epigenetic transcriptional repression and participates in X chromosome inactivation of female mammals. Essential component of a Polycomb group (PcG) multiprotein PRC1-like complex, a complex class required to maintain the transcriptionally repressive state of many genes, including Hox genes, throughout development. PcG PRC1 complex acts via chromatin remodeling and modification of histones, rendering chromatin heritably changed in its expressibility. Compared to RNF2/RING2, it does not have the main E3 ubiquitin ligase activity on histone H2A, and it may rather act as a modulator of RNF2/RING2 activity. The protein is E3 ubiquitin-protein ligase RING1 of Mus musculus (Mouse).